The following is a 556-amino-acid chain: Urocanate hydratase (556 aa).

Residues 52–53 (GG), Q130, 176–178 (GMG), E196, R201, 242–243 (NA), 263–267 (QTSAH), 273–274 (YL), and Y322 contribute to the NAD(+) site. C410 is a catalytic residue. NAD(+) is bound at residue G492.

The protein belongs to the urocanase family. NAD(+) is required as a cofactor.

Its subcellular location is the cytoplasm. It catalyses the reaction 4-imidazolone-5-propanoate = trans-urocanate + H2O. It participates in amino-acid degradation; L-histidine degradation into L-glutamate; N-formimidoyl-L-glutamate from L-histidine: step 2/3. Its function is as follows. Catalyzes the conversion of urocanate to 4-imidazolone-5-propionate. This chain is Urocanate hydratase, found in Bradyrhizobium diazoefficiens (strain JCM 10833 / BCRC 13528 / IAM 13628 / NBRC 14792 / USDA 110).